We begin with the raw amino-acid sequence, 462 residues long: Protein MOS2 (462 aa).

A compositionally biased stretch (low complexity) spans 1–10; it reads MKLSFSLPSK. Positions 1 to 32 are disordered; the sequence is MKLSFSLPSKSKPKVTATTADGNNAVDDGTSK. Residues 156 to 202 form the G-patch domain; the sequence is VDGFGAALMAGYGWKPGKGIGKNAKEDVEIKEYKKWTAKEGLGFDPD. Residues 231 to 258 form the KOW 1 domain; that stretch reads VFFVGKEVRIIAGRDVGLKGKIVEKPGS. The segment covering 301-336 has biased composition (basic and acidic residues); the sequence is DREKDKKTSGRGRGAERGSRSEVRASEKQDRGQTRE. The tract at residues 301-340 is disordered; the sequence is DREKDKKTSGRGRGAERGSRSEVRASEKQDRGQTRERKVK. In terms of domain architecture, KOW 2 spans 401-428; sequence LPRRGGPVLVLSGKHKGVYGNLVEKDLD.

Belongs to the MOS2 family.

The protein resides in the nucleus. Functionally, required for innate and induced resistance to pathogens such as compatible and incompatible isolates of P.syringae and P.parasitica. This Arabidopsis thaliana (Mouse-ear cress) protein is Protein MOS2 (MOS2).